The following is a 422-amino-acid chain: Ribonuclease Y (422 aa).

The KH domain occupies 112-172 (TTNIVKLPSD…IRREIATRTL (61 aa)). One can recognise an HD domain in the interval 238–331 (VLAHSIEVAK…VAIADSISAS (94 aa)).

The protein belongs to the RNase Y family.

Its function is as follows. Endoribonuclease that initiates mRNA decay. In Mycoplasma mycoides, this protein is Ribonuclease Y.